The following is a 214-amino-acid chain: Vascular endothelial growth factor A (214 aa).

Positions Met-1–Ala-26 are cleaved as a signal peptide. 3 cysteine pairs are disulfide-bonded: Cys-51-Cys-93, Cys-82-Cys-127, and Cys-86-Cys-129. Residue Asn-100 is glycosylated (N-linked (GlcNAc...) asparagine). A compositionally biased stretch (basic and acidic residues) spans Pro-131–Ser-142. Residues Pro-131–Phe-159 form a disordered region. The segment covering Val-143–Phe-159 has biased composition (basic residues).

The protein belongs to the PDGF/VEGF growth factor family. As to quaternary structure, homodimer; disulfide-linked. Also found as heterodimer with PGF. Interacts with NRP1. Interacts with isoform 2 of BSG. Interacts with CD82; this interaction inhibits VEGFA-mediated signaling pathway. In terms of tissue distribution, expressed in the pituitary, in brain, in particularly in supraoptic and paraventricular nuclei and the choroid plexus. Also found abundantly in the corpus luteum of the ovary and in kidney glomeruli. Expressed in the ductal epithelial cells of post-pubertal mammary glands. Expressed in the ductal and alveolar epithelial cells throughout the whole period of gestational evolution, lactation and involution.

It localises to the secreted. In terms of biological role, growth factor active in angiogenesis, vasculogenesis and endothelial cell growth. Induces endothelial cell proliferation, promotes cell migration, inhibits apoptosis and induces permeabilization of blood vessels. Binds to the FLT1/VEGFR1 and KDR/VEGFR2 receptors, heparan sulfate and heparin. May play a role in increasing vascular permeability during lactation, when increased transport of molecules from the blood is required for efficient milk protein synthesis. Binding to NRP1 receptor initiates a signaling pathway needed for motor neuron axon guidance and cell body migration, including for the caudal migration of facial motor neurons from rhombomere 4 to rhombomere 6 during embryonic development. Also binds the DEAR/FBXW7-AS1 receptor. The sequence is that of Vascular endothelial growth factor A (Vegfa) from Rattus norvegicus (Rat).